Here is a 170-residue protein sequence, read N- to C-terminus: Probable phospholipid hydroperoxide glutathione peroxidase (170 aa).

Cys-44 is a catalytic residue.

The protein belongs to the glutathione peroxidase family.

It localises to the cytoplasm. It carries out the reaction a hydroperoxy polyunsaturated fatty acid + 2 glutathione = a hydroxy polyunsaturated fatty acid + glutathione disulfide + H2O. Protects cells and enzymes from oxidative damage, by catalyzing the reduction of hydrogen peroxide, lipid peroxides and organic hydroperoxide, by glutathione. The polypeptide is Probable phospholipid hydroperoxide glutathione peroxidase (GPXMC1) (Mesembryanthemum crystallinum (Common ice plant)).